The chain runs to 95 residues: Pyrimidine/purine nucleoside phosphorylase (95 aa).

This sequence belongs to the nucleoside phosphorylase PpnP family.

It carries out the reaction a purine D-ribonucleoside + phosphate = a purine nucleobase + alpha-D-ribose 1-phosphate. The enzyme catalyses adenosine + phosphate = alpha-D-ribose 1-phosphate + adenine. It catalyses the reaction cytidine + phosphate = cytosine + alpha-D-ribose 1-phosphate. The catalysed reaction is guanosine + phosphate = alpha-D-ribose 1-phosphate + guanine. It carries out the reaction inosine + phosphate = alpha-D-ribose 1-phosphate + hypoxanthine. The enzyme catalyses thymidine + phosphate = 2-deoxy-alpha-D-ribose 1-phosphate + thymine. It catalyses the reaction uridine + phosphate = alpha-D-ribose 1-phosphate + uracil. The catalysed reaction is xanthosine + phosphate = alpha-D-ribose 1-phosphate + xanthine. Catalyzes the phosphorolysis of diverse nucleosides, yielding D-ribose 1-phosphate and the respective free bases. Can use uridine, adenosine, guanosine, cytidine, thymidine, inosine and xanthosine as substrates. Also catalyzes the reverse reactions. The polypeptide is Pyrimidine/purine nucleoside phosphorylase (Enterobacter sp. (strain 638)).